Here is a 698-residue protein sequence, read N- to C-terminus: Ion-translocating oxidoreductase complex subunit C (698 aa).

2 consecutive 4Fe-4S ferredoxin-type domains span residues 366–397 (TEMG…QQLY) and 407–436 (KARN…VQYY). Residues cysteine 377, cysteine 380, cysteine 383, cysteine 387, cysteine 416, cysteine 419, cysteine 422, and cysteine 426 each contribute to the [4Fe-4S] cluster site.

It belongs to the 4Fe4S bacterial-type ferredoxin family. RnfC subfamily. As to quaternary structure, the complex is composed of six subunits: RnfA, RnfB, RnfC, RnfD, RnfE and RnfG. [4Fe-4S] cluster serves as cofactor.

The protein localises to the cell inner membrane. Functionally, part of a membrane-bound complex that couples electron transfer with translocation of ions across the membrane. The chain is Ion-translocating oxidoreductase complex subunit C from Yersinia pseudotuberculosis serotype O:3 (strain YPIII).